Reading from the N-terminus, the 63-residue chain is uncharacterized protein (63 aa).

Positions 1–17 (MRYTDSRKLTPETDANH) are enriched in basic and acidic residues. A disordered region spans residues 1–32 (MRYTDSRKLTPETDANHKTASPQPIRRISSQT). Residues 18 to 32 (KTASPQPIRRISSQT) are compositionally biased toward polar residues.

This sequence to Y.enterocolitica HemP.

This is an uncharacterized protein from Escherichia coli (strain K12).